Here is a 430-residue protein sequence, read N- to C-terminus: Adenylosuccinate synthetase (430 aa).

GTP-binding positions include G12–K18 and G40–T42. Catalysis depends on D13, which acts as the Proton acceptor. Mg(2+)-binding residues include D13 and G40. Residues D13–K16, N38–H41, T128, R142, Q223, T238, and R302 each bind IMP. H41 functions as the Proton donor in the catalytic mechanism. T298–R304 serves as a coordination point for substrate. GTP-binding positions include R304, S330–D332, and S412–G414.

This sequence belongs to the adenylosuccinate synthetase family. In terms of assembly, homodimer. Requires Mg(2+) as cofactor.

The protein resides in the cytoplasm. It carries out the reaction IMP + L-aspartate + GTP = N(6)-(1,2-dicarboxyethyl)-AMP + GDP + phosphate + 2 H(+). Its pathway is purine metabolism; AMP biosynthesis via de novo pathway; AMP from IMP: step 1/2. Plays an important role in the de novo pathway of purine nucleotide biosynthesis. Catalyzes the first committed step in the biosynthesis of AMP from IMP. This is Adenylosuccinate synthetase from Streptococcus pyogenes serotype M6 (strain ATCC BAA-946 / MGAS10394).